A 117-amino-acid polypeptide reads, in one-letter code: NADH-ubiquinone oxidoreductase chain 3 (117 aa).

A run of 3 helical transmembrane segments spans residues 1-21 (MLMLSTMTLIIFIITIVVMML), 58-78 (FLIAIIFLIFDVEIALLLPMI), and 86-106 (LMNWTITSLFFIFILLIGLYH).

The protein belongs to the complex I subunit 3 family.

The protein localises to the mitochondrion membrane. It carries out the reaction a ubiquinone + NADH + 5 H(+)(in) = a ubiquinol + NAD(+) + 4 H(+)(out). Core subunit of the mitochondrial membrane respiratory chain NADH dehydrogenase (Complex I) that is believed to belong to the minimal assembly required for catalysis. Complex I functions in the transfer of electrons from NADH to the respiratory chain. The immediate electron acceptor for the enzyme is believed to be ubiquinone. The sequence is that of NADH-ubiquinone oxidoreductase chain 3 (mt:ND3) from Anopheles gambiae (African malaria mosquito).